The following is a 398-amino-acid chain: Organelle RRM domain-containing protein 1, chloroplastic (398 aa).

A chloroplast-targeting transit peptide spans 1–88 (MDTALPSVLI…RWVVVMDTPP (88 aa)). A compositionally biased stretch (low complexity) spans 54-70 (LLASSSESPPAQLAAAS). The disordered stretch occupies residues 54-79 (LLASSSESPPAQLAAASTESQSRSSR). One can recognise an RRM domain in the interval 299–377 (KRLFVTGLSF…WMIVVDVAKT (79 aa)).

It is found in the plastid. The protein localises to the chloroplast. In terms of biological role, involved in C-to-U editing of chloroplastic RNA. Functions as major chloroplastic editing factor. Controls a majority of the chloroplastic editing sites. In Zea mays (Maize), this protein is Organelle RRM domain-containing protein 1, chloroplastic (ORRM1).